The sequence spans 648 residues: Bifunctional lysine-specific demethylase and histidyl-hydroxylase NO66 (648 aa).

A disordered region spans residues 1-168; it reads MSKVSSIFDT…KGAKAAKKNK (168 aa). A compositionally biased stretch (low complexity) spans 17-28; it reads PATTENGAAAKP. Basic residues predominate over residues 109–119; that stretch reads DHRKHKEKLRK. Residues 123 to 137 are compositionally biased toward polar residues; the sequence is GVENSRQAAASTSML. A compositionally biased stretch (basic residues) spans 155-168; it reads PVHHKGAKAAKKNK. The JmjC domain maps to 308–453; that stretch reads CSIRMLNPQT…DLLELYLPHA (146 aa). Fe cation contacts are provided by H354, D356, and H419.

It belongs to the ROX family. NO66 subfamily. Requires Fe(2+) as cofactor.

It localises to the nucleus. The enzyme catalyses N(6),N(6)-dimethyl-L-lysyl(36)-[histone H3] + 2 2-oxoglutarate + 2 O2 = L-lysyl(36)-[histone H3] + 2 formaldehyde + 2 succinate + 2 CO2. In terms of biological role, oxygenase that can act as both a histone lysine demethylase and a ribosomal histidine hydroxylase. Specifically demethylates 'Lys-4' (H3K4me) and 'Lys-36' (H3K36me) of histone H3, thereby playing a central role in histone code. This Culex quinquefasciatus (Southern house mosquito) protein is Bifunctional lysine-specific demethylase and histidyl-hydroxylase NO66.